The following is a 2813-amino-acid chain: von Willebrand factor (2813 aa).

Residues 1 to 22 (MSPTRLVRVLLALALILPGKLC) form the signal peptide. Residues 23 to 763 (TKGTVGRSSM…SSPRSHRSKR (741 aa)) constitute a propeptide that is removed on maturation. In terms of domain architecture, VWFD 1 spans 33–201 (ARCSLFGGDF…ALSSGEQRCK (169 aa)). Cystine bridges form between C35–C162 and C57–C200. Residues N99, N156, and N211 are each glycosylated (N-linked (GlcNAc...) asparagine). The region spanning 295–348 (CPAGMEYKECVSPCTRTCQSLHVKEVCQEQCVDGCSCPEGQLLDEGHCVGSAEC) is the TIL 1 domain. Residues 386–560 (GECLVTGQSH…NAWKLLGACE (175 aa)) enclose the VWFD 2 domain. 3 disulfides stabilise this stretch: C388-C524, C410-C559, and C432-C440. The Cell attachment site signature appears at 531–533 (RGD). 2 TIL domains span residues 652-707 (CPQG…KAQC) and 776-827 (CPAD…LERC). N666 carries N-linked (GlcNAc...) asparagine glycosylation. A Cell attachment site motif is present at residues 698–700 (RGD). The interval 764–787 (SLSCRPPMVKLVCPADNPRAEGLE) is amino-terminal. 3 disulfides stabilise this stretch: C767–C808, C776–C804, and C810–C821. Residues 788 to 833 (CAKTCQNYDLQCMSTGCVSGCLCPQGMVRHENRCVALERCPCFHQG) form an E1 region. Residues 826–853 (RCPCFHQGQEYAPGETVKIDCNTCVCRD) form a CX region. The N-linked (GlcNAc...) asparagine glycan is linked to N857. In terms of domain architecture, VWFD 3 spans 865 to 1032 (ATCSAIGMAH…NSWKVNPQCA (168 aa)). 11 disulfide bridges follow: C867–C996, C889–C1031, C898–C993, C914–C921, C1060–C1084, C1071–C1111, C1089–C1091, C1126–C1130, C1149–C1169, C1153–C1165, and C1196–C1199. Residues 1146-1196 (YNSCAPACPITCQHPEPLACPVQCVEGCHAHCPPGKILDELLQTCIDPEDC) enclose the TIL 4 domain. The N-linked (GlcNAc...) asparagine glycan is linked to N1231. Intrachain disulfides connect C1234–C1237 and C1272–C1458. VWFA domains lie at 1277–1453 (DLVF…RDEI) and 1498–1665 (DVVF…PDLV). N-linked (GlcNAc...) asparagine glycans are attached at residues N1515 and N1574. Intrachain disulfides connect C1669–C1670, C1686–C1872, C1879–C1904, C1899–C1940, C1927–C2088, C1950–C2085, C1972–C2123, and C1993–C2001. In terms of domain architecture, VWFA 3 spans 1691 to 1871 (DVVLLLDGSS…TLGNSFFHKL (181 aa)). A VWFD 4 domain is found at 1948–2124 (CVCMGSSTRH…TVQQLGKTCQ (177 aa)). Positions 2216–2261 (CPRLCEGNTSSCGDQPSEGCFCPPNQVMLEGSCVPEEACTQCISED) are E2. Residues N2223, N2290, N2357, and N2400 are each glycosylated (N-linked (GlcNAc...) asparagine). The VWFC 1 domain maps to 2255–2328 (TQCISEDGVR…CCPEYECVCD (74 aa)). The 67-residue stretch at 2429–2495 (KVCVHRGTIY…HEGECCGRCL (67 aa)) folds into the VWFC 2 domain. The Cell attachment site signature appears at 2507-2509 (RGD). N2546 and N2585 each carry an N-linked (GlcNAc...) asparagine glycan. Residues 2580–2645 (EACLLNGTII…NQGECCGRCL (66 aa)) form the VWFC 3 domain. Cystine bridges form between C2724–C2774, C2739–C2788, C2750–C2804, and C2754–C2806. In terms of domain architecture, CTCK spans 2724-2812 (CKDIIAKLQR…QCRCSPRKCS (89 aa)). The N-linked (GlcNAc...) asparagine glycan is linked to N2790.

As to quaternary structure, multimeric. Interacts with F8. Post-translationally, all cysteine residues are involved in intrachain or interchain disulfide bonds. N- and O-glycosylated. Plasma.

It is found in the secreted. It localises to the extracellular space. The protein resides in the extracellular matrix. Functionally, important in the maintenance of hemostasis, it promotes adhesion of platelets to the sites of vascular injury by forming a molecular bridge between sub-endothelial collagen matrix and platelet-surface receptor complex, glycoprotein Ibalpha/IX/V. Also acts as a chaperone for coagulation factor VIII, delivering it to the site of injury, stabilizing its heterodimeric structure and protecting it from premature clearance from plasma. The chain is von Willebrand factor (VWF) from Canis lupus familiaris (Dog).